Here is a 742-residue protein sequence, read N- to C-terminus: Conidiogenone synthase (742 aa).

The tract at residues 1–332 is terpene cyclase; it reads MGETIADVYA…SLCVPRYFKV (332 aa). Aspartate 97 contacts Mg(2+). Substrate-binding positions include aspartate 97, 190-193, asparagine 234, 238-242, and 328-329; these read RIVD, SWDKE, and RY. A DDXXD 1 motif is present at residues 97–101; it reads DDETD. An NSE/DTE motif is present at residues 234-242; it reads NDLFSWDKE. Residues 333-742 are prenyltransferase; it reads ERNPYKDHLE…LRAMEEASQK (410 aa). Isopentenyl diphosphate-binding residues include lysine 414, arginine 417, and histidine 446. Aspartate 453 and aspartate 457 together coordinate Mg(2+). The DDXXD 2 signature appears at 453–457; the sequence is DDIQD. Arginine 462 is a binding site for dimethylallyl diphosphate. An isopentenyl diphosphate-binding site is contributed by arginine 463. Residues lysine 539, threonine 540, glutamine 575, asparagine 582, lysine 592, and lysine 602 each coordinate dimethylallyl diphosphate. Positions 701-724 are disordered; sequence EAHKSDSAWKVNQRRAWKGSQKNG.

This sequence in the N-terminal section; belongs to the terpene synthase family. It in the C-terminal section; belongs to the FPP/GGPP synthase family. Hexamer. Mg(2+) serves as cofactor.

The catalysed reaction is isopentenyl diphosphate + (2E,6E)-farnesyl diphosphate = (2E,6E,10E)-geranylgeranyl diphosphate + diphosphate. It functions in the pathway secondary metabolite biosynthesis; terpenoid biosynthesis. Bifunctional terpene synthase; part of the gene cluster that mediates the biosynthesis of conidiogenone, a diterpene known to induce the conidiation. The bifunctional terpene synthase PrDS converts isopentenyl diphosphate (IPP) and dimethylallyl diphosphate (DMAPP) into deoxyconidiogenol. The C-terminal prenyltransferase (PT) domain of PrDS catalyzes formation of GGPP, whereas the N-terminal terpene cyclase (TC) domain catalyzes the cyclization of GGPP into deoxyconidiogenol. The cytochrome P450 monooxygenase PrP450 then catalyzes two rounds of oxidation to furnish conidiogenone. The chain is Conidiogenone synthase from Penicillium roqueforti (strain FM164).